A 121-amino-acid chain; its full sequence is MVHHITSNDELQKLLSSTTYVVVDFFADWCPPCKAIAPVYEQLSTKHSVPDVLAFAKVNVDHVQDAAQQYGITAMPTFMFFKEGKQVAVNGQAVIKGADPRTLGAAAEKLGGLAQKRVAGA.

In terms of domain architecture, Thioredoxin spans 2 to 112 (VHHITSNDEL…LGAAAEKLGG (111 aa)). The cysteines at positions 30 and 33 are disulfide-linked.

This sequence belongs to the thioredoxin family.

Its function is as follows. Participates in various redox reactions through the reversible oxidation of its active center dithiol to a disulfide and catalyzes dithiol-disulfide exchange reactions. This is Thioredoxin-like protein from Fusarium culmorum.